The following is a 77-amino-acid chain: Putative defensin-like protein 185 (77 aa).

The signal sequence occupies residues 1 to 22 (MKNSSILLLLVVFFVISSSGEA). 4 disulfides stabilise this stretch: Cys-25/Cys-77, Cys-31/Cys-54, Cys-40/Cys-71, and Cys-44/Cys-73.

The protein belongs to the DEFL family.

Its subcellular location is the secreted. The sequence is that of Putative defensin-like protein 185 (LCR39) from Arabidopsis thaliana (Mouse-ear cress).